A 161-amino-acid chain; its full sequence is 2-C-methyl-D-erythritol 2,4-cyclodiphosphate synthase (161 aa).

The a divalent metal cation site is built by Asp8 and His10. Residues Asp8–His10 and His34–Ser35 contribute to the 4-CDP-2-C-methyl-D-erythritol 2-phosphate site. An a divalent metal cation-binding site is contributed by His42. 4-CDP-2-C-methyl-D-erythritol 2-phosphate is bound by residues Asp56–Gly58, Ala100–Leu106, and Arg142.

It belongs to the IspF family. As to quaternary structure, homotrimer. A divalent metal cation serves as cofactor.

The catalysed reaction is 4-CDP-2-C-methyl-D-erythritol 2-phosphate = 2-C-methyl-D-erythritol 2,4-cyclic diphosphate + CMP. It participates in isoprenoid biosynthesis; isopentenyl diphosphate biosynthesis via DXP pathway; isopentenyl diphosphate from 1-deoxy-D-xylulose 5-phosphate: step 4/6. In terms of biological role, involved in the biosynthesis of isopentenyl diphosphate (IPP) and dimethylallyl diphosphate (DMAPP), two major building blocks of isoprenoid compounds. Catalyzes the conversion of 4-diphosphocytidyl-2-C-methyl-D-erythritol 2-phosphate (CDP-ME2P) to 2-C-methyl-D-erythritol 2,4-cyclodiphosphate (ME-CPP) with a corresponding release of cytidine 5-monophosphate (CMP). This is 2-C-methyl-D-erythritol 2,4-cyclodiphosphate synthase from Buchnera aphidicola subsp. Acyrthosiphon pisum (strain 5A).